The sequence spans 533 residues: Phosphoenolpyruvate carboxykinase (ATP) (533 aa).

3 residues coordinate substrate: Arg-59, Tyr-199, and Lys-205. Residues Lys-205, His-224, and 240–248 each bind ATP; that span reads GLSGTGKTT. Positions 205 and 224 each coordinate Mn(2+). Asp-261 is a Mn(2+) binding site. ATP is bound by residues Glu-289, Arg-325, 441-442, and Thr-447; that span reads RI. Arg-325 contacts substrate.

It belongs to the phosphoenolpyruvate carboxykinase (ATP) family. In terms of assembly, monomer. Mn(2+) is required as a cofactor.

Its subcellular location is the cytoplasm. The catalysed reaction is oxaloacetate + ATP = phosphoenolpyruvate + ADP + CO2. Its pathway is carbohydrate biosynthesis; gluconeogenesis. Its function is as follows. Involved in the gluconeogenesis. Catalyzes the conversion of oxaloacetate (OAA) to phosphoenolpyruvate (PEP) through direct phosphoryl transfer between the nucleoside triphosphate and OAA. This chain is Phosphoenolpyruvate carboxykinase (ATP), found in Idiomarina loihiensis (strain ATCC BAA-735 / DSM 15497 / L2-TR).